Reading from the N-terminus, the 1410-residue chain is Condensin-1 complex subunit CAP-D2 (1410 aa).

The segment covering 469 to 480 (LEPTEHASKEST) has biased composition (basic and acidic residues). Disordered regions lie at residues 469 to 492 (LEPT…DGEI), 504 to 525 (HQDS…EKDV), 860 to 879 (KTKK…NLEA), and 1208 to 1410 (KEQE…GSRS). Polar residues predominate over residues 869 to 879 (ESQNTEENLEA). Basic and acidic residues predominate over residues 1208–1226 (KEQEETARNAEVHREKTKT). Acidic residues-rich tracts occupy residues 1240–1284 (PVEE…EEPD) and 1306–1319 (IETE…DSEP). A compositionally biased stretch (polar residues) spans 1323 to 1339 (QCGTTNPRSLNRKTSGD). Residues 1342-1365 (IETESEEEQSDSEEEPSDSEEEPD) are compositionally biased toward acidic residues. Polar residues predominate over residues 1368-1379 (QCGTTNPRSLNQ).

The protein belongs to the CND1 (condensin subunit 1) family. In terms of assembly, component of the condensin complex. In terms of tissue distribution, present in buds.

The protein localises to the chromosome. It localises to the nucleus. Essential protein. Regulatory subunit of the condensin complex, a complex required for conversion of interphase chromatin into mitotic-like condense chromosomes. The condensin complex probably introduces positive supercoils into relaxed DNA in the presence of type I topoisomerases and converts nicked DNA into positive knotted forms in the presence of type II topoisomerases. Required for fertility, growth and euchromatin organization, but not for sister chromatid cohesion. Necessary to maintain normal structural integrity of the meiotic chromosomes during the two nuclear divisions of gametogenesis, especially to maintain compaction of the centromeric repeats and 45S rDNA. Also seems to be involved in crossover formation during meiotic prophase I. Prevents centromeric and pericentromeric heterochromatin repeats association. Contributes to the induction of stress-responsive genes in response to stress treatment. The sequence is that of Condensin-1 complex subunit CAP-D2 from Arabidopsis thaliana (Mouse-ear cress).